Consider the following 1026-residue polypeptide: Multidrug resistance protein MdtC (1026 aa).

Helical transmembrane passes span 15–35 (ILIAAAITLCGILGFRLLPVA), 333–353 (EVEETLAISVALVILVVFLFL), 360–380 (LIPAVAVPVSLIGTFAAMYLC), 387–407 (LSLMALTIATGFVVDDAIVVL), 431–451 (VGFTVISMSLSLVAVFLPLLL), 463–483 (FAVTLSVAIGISLVVSLTLTP), 528–548 (LVGVVFLGTVALNIWLYIAIP), 853–873 (LILIVAAIATVYIVLEILYES), 897–917 (LFNAPFSLIALIGIMLLIGIV), 953–973 (PIMMTTLAALFGALPLVLSGG), and 984–1004 (ITIVGGLVMSQLLTLYTTPVV).

The protein belongs to the resistance-nodulation-cell division (RND) (TC 2.A.6) family. MdtC subfamily. In terms of assembly, part of a tripartite efflux system composed of MdtA, MdtB and MdtC. MdtC forms a heteromultimer with MdtB.

It is found in the cell inner membrane. This is Multidrug resistance protein MdtC from Salmonella paratyphi A (strain ATCC 9150 / SARB42).